The chain runs to 485 residues: Cys-Gly metallodipeptidase DUG1 (485 aa).

Zn(2+) is bound at residue His-109. The active site involves Asp-111. Residue Asp-144 coordinates Zn(2+). Glu-178 functions as the Proton acceptor in the catalytic mechanism. Residues Glu-179, Asp-207, and His-457 each contribute to the Zn(2+) site.

It belongs to the peptidase M20A family. In terms of assembly, homodimer. Component of the GSH degradosomal complex. It depends on Zn(2+) as a cofactor. Requires Mn(2+) as cofactor.

It is found in the cytoplasm. Its function is as follows. Catalytic component of the GSH degradosomal complex involved in the degradation of glutathione (GSH) and other peptides containing a gamma-glu-X bond. Also functions as a dipeptidase with high specificity for Cys-Gly and no activity toward tri- or tetrapeptides. This is Cys-Gly metallodipeptidase DUG1 (DUG1) from Candida albicans (strain SC5314 / ATCC MYA-2876) (Yeast).